The chain runs to 291 residues: Nucleotide-binding protein jk1004 (291 aa).

16–23 (GMSGAGRR) serves as a coordination point for ATP. Residue 67–70 (DVRS) participates in GTP binding.

Belongs to the RapZ-like family.

Displays ATPase and GTPase activities. The chain is Nucleotide-binding protein jk1004 from Corynebacterium jeikeium (strain K411).